The following is a 526-amino-acid chain: Lysine--tRNA ligase (526 aa).

Mg(2+) is bound by residues E431 and E438.

This sequence belongs to the class-II aminoacyl-tRNA synthetase family. In terms of assembly, homodimer. Requires Mg(2+) as cofactor.

The protein resides in the cytoplasm. The enzyme catalyses tRNA(Lys) + L-lysine + ATP = L-lysyl-tRNA(Lys) + AMP + diphosphate. The protein is Lysine--tRNA ligase of Chlamydia trachomatis serovar L2b (strain UCH-1/proctitis).